A 383-amino-acid polypeptide reads, in one-letter code: Cell division protein FtsZ (383 aa).

Residues 20–24 (GGGGN), 107–109 (GTG), E138, R142, and N186 contribute to the GTP site.

It belongs to the FtsZ family. Homodimer. Polymerizes to form a dynamic ring structure in a strictly GTP-dependent manner. Interacts directly with several other division proteins.

Its subcellular location is the cytoplasm. Functionally, essential cell division protein that forms a contractile ring structure (Z ring) at the future cell division site. The regulation of the ring assembly controls the timing and the location of cell division. One of the functions of the FtsZ ring is to recruit other cell division proteins to the septum to produce a new cell wall between the dividing cells. Binds GTP and shows GTPase activity. This chain is Cell division protein FtsZ, found in Escherichia coli O157:H7.